The primary structure comprises 96 residues: Integration host factor subunit beta (96 aa).

It belongs to the bacterial histone-like protein family. Heterodimer of an alpha and a beta chain.

Functionally, this protein is one of the two subunits of integration host factor, a specific DNA-binding protein that functions in genetic recombination as well as in transcriptional and translational control. This Methylocella silvestris (strain DSM 15510 / CIP 108128 / LMG 27833 / NCIMB 13906 / BL2) protein is Integration host factor subunit beta.